The sequence spans 295 residues: Bifunctional protein FolD (295 aa).

NADP(+) is bound by residues 163–165 (GRS), S188, and I229.

The protein belongs to the tetrahydrofolate dehydrogenase/cyclohydrolase family. As to quaternary structure, homodimer.

The catalysed reaction is (6R)-5,10-methylene-5,6,7,8-tetrahydrofolate + NADP(+) = (6R)-5,10-methenyltetrahydrofolate + NADPH. It catalyses the reaction (6R)-5,10-methenyltetrahydrofolate + H2O = (6R)-10-formyltetrahydrofolate + H(+). It participates in one-carbon metabolism; tetrahydrofolate interconversion. In terms of biological role, catalyzes the oxidation of 5,10-methylenetetrahydrofolate to 5,10-methenyltetrahydrofolate and then the hydrolysis of 5,10-methenyltetrahydrofolate to 10-formyltetrahydrofolate. This is Bifunctional protein FolD from Hyphomonas neptunium (strain ATCC 15444).